Consider the following 163-residue polypeptide: Phosphopantetheine adenylyltransferase (163 aa).

Ser-11 contributes to the substrate binding site. ATP is bound by residues 11–12 (SF) and His-19. Lys-43, Ala-76, and Arg-90 together coordinate substrate. Residues 91–93 (GLR), Glu-101, and 126–132 (WQALSSS) contribute to the ATP site.

This sequence belongs to the bacterial CoaD family. As to quaternary structure, homohexamer. It depends on Mg(2+) as a cofactor.

It localises to the cytoplasm. It carries out the reaction (R)-4'-phosphopantetheine + ATP + H(+) = 3'-dephospho-CoA + diphosphate. It participates in cofactor biosynthesis; coenzyme A biosynthesis; CoA from (R)-pantothenate: step 4/5. Reversibly transfers an adenylyl group from ATP to 4'-phosphopantetheine, yielding dephospho-CoA (dPCoA) and pyrophosphate. In Streptococcus pyogenes serotype M6 (strain ATCC BAA-946 / MGAS10394), this protein is Phosphopantetheine adenylyltransferase.